Reading from the N-terminus, the 244-residue chain is 3-deoxy-manno-octulosonate cytidylyltransferase (244 aa).

The protein belongs to the KdsB family.

Its subcellular location is the cytoplasm. The catalysed reaction is 3-deoxy-alpha-D-manno-oct-2-ulosonate + CTP = CMP-3-deoxy-beta-D-manno-octulosonate + diphosphate. It functions in the pathway nucleotide-sugar biosynthesis; CMP-3-deoxy-D-manno-octulosonate biosynthesis; CMP-3-deoxy-D-manno-octulosonate from 3-deoxy-D-manno-octulosonate and CTP: step 1/1. Its pathway is bacterial outer membrane biogenesis; lipopolysaccharide biosynthesis. Its function is as follows. Activates KDO (a required 8-carbon sugar) for incorporation into bacterial lipopolysaccharide in Gram-negative bacteria. This Rickettsia bellii (strain OSU 85-389) protein is 3-deoxy-manno-octulosonate cytidylyltransferase.